Reading from the N-terminus, the 342-residue chain is Non-homologous end-joining protein 1 (342 aa).

The next 2 membrane-spanning stretches (helical) occupy residues 27–47 (LLLF…LVSL) and 129–149 (MFYM…NLST). The interaction with LIF1 stretch occupies residues 173-342 (LRDLDGGSKV…RKFGKVRIKN (170 aa)). Residues 270 to 342 (ADPTNEARPN…RKFGKVRIKN (73 aa)) are disordered. Over residues 286–296 (PKTDFKPKSRE) the composition is skewed to basic and acidic residues. A compositionally biased stretch (polar residues) spans 297–312 (SSTSSQLRLENFSESE). Residues 331-342 (KKRKFGKVRIKN) show a composition bias toward basic residues.

This sequence belongs to the XRCC4-XLF family. XLF subfamily. In terms of assembly, interacts (via C-terminus) with LIF1 (via N-terminus); the interaction is direct. Interacts with DNL4.

It localises to the cytoplasm. The protein localises to the nucleus membrane. Functionally, involved in non-homologous end joining (NHEJ). Facilitates the transport of LIF1 into the nucleus, where it can interact with DNA ligase DNL4 to repair double-strand breaks (DSB). Mediates mating-type regulation of NHEJ. Prevents chromosome circularisation by NHEJ in absence of telomerase. This is Non-homologous end-joining protein 1 (NEJ1) from Saccharomyces cerevisiae (strain ATCC 204508 / S288c) (Baker's yeast).